Here is a 956-residue protein sequence, read N- to C-terminus: Kinesin heavy chain isoform 5C (956 aa).

In terms of domain architecture, Kinesin motor spans 8–327; sequence SIKVMCRFRP…LMFGQRAKTI (320 aa). The ATP site is built by Gln-87, Ser-89, Ser-90, Gly-91, Lys-92, Thr-93, His-94, and Lys-99. The microtubule-binding stretch occupies residues 174–315; sequence VSSPEEVMDV…PSVFNEAETK (142 aa). Thr-403 bears the Phosphothreonine mark. Positions 406-923 form a coiled coil; that stretch reads VDGISAEKEK…RRAHSAQIAK (518 aa). Residues 859–956 are globular; it reads CELPKLEKRL…GSSNSTHYQK (98 aa). The segment at 910 to 956 is disordered; that stretch reads KNMARRAHSAQIAKPIRPGHYPASSPTAVHAVRGGGGGSSNSTHYQK.

Belongs to the TRAFAC class myosin-kinesin ATPase superfamily. Kinesin family. Kinesin subfamily. Oligomer composed of two heavy chains and two light chains. Interacts with GRIP1. Interacts with KLC3 and TRAK1. Interacts with ZFYVE27.

The protein resides in the cytoplasm. Its subcellular location is the cytoskeleton. The protein localises to the cell projection. It is found in the dendrite. It catalyses the reaction ATP + H2O = ADP + phosphate + H(+). Its function is as follows. Microtubule-associated force-producing protein that may play a role in organelle transport. Has ATPase activity. Involved in synaptic transmission. Mediates dendritic trafficking of mRNAs. Required for anterograde axonal transportation of MAPK8IP3/JIP3 which is essential for MAPK8IP3/JIP3 function in axon elongation. The sequence is that of Kinesin heavy chain isoform 5C (Kif5c) from Mus musculus (Mouse).